We begin with the raw amino-acid sequence, 1550 residues long: Protein TIME FOR COFFEE (1550 aa).

10 disordered regions span residues 1–191 (MDRN…PVSP), 207–304 (VPRK…PVAV), 325–505 (TSKQ…SERG), 708–736 (QGSV…TAQR), 779–805 (RPPN…SATP), 859–1023 (FNGS…KAGV), 1086–1130 (ASLE…QSIA), 1163–1196 (ALPQ…SQQP), 1213–1296 (AASA…SVAA), and 1321–1435 (NSKP…PKHG). A compositionally biased stretch (basic and acidic residues) spans 43 to 80 (EAARLRDRGGSNKKDRDRERDRDRERERERDRERDRLN). The span at 100–118 (DGGDDSSEESVNDDEEYDD) shows a compositional bias: acidic residues. Low complexity predominate over residues 134–151 (SNNISAASFSSSLSNHHN). Basic residues predominate over residues 157–171 (LHHHHHSHNNNHQRK). A compositionally biased stretch (polar residues) spans 241–250 (RQISSTSPAN). Low complexity predominate over residues 292 to 301 (KSSSSKLSSP). Polar residues predominate over residues 348-366 (RVSSPISNPQTLPQSSITL). Low complexity predominate over residues 367–379 (AANSSSSNVSAIA). Residues 409-432 (SKSQVPFSNQLKSSGSGEGNSSVL) show a composition bias toward polar residues. 2 stretches are compositionally biased toward basic and acidic residues: residues 447–461 (DSEK…DETI) and 473–490 (SDGE…KFEI). Composition is skewed to polar residues over residues 713 to 736 (GRSS…TAQR), 783 to 803 (SGIT…SASA), and 884 to 992 (LTGQ…NLGL). Residues 1112–1126 (SGGGAIGKTSGGNGG) are compositionally biased toward gly residues. The span at 1164 to 1173 (LPQSSGSLPT) shows a compositional bias: polar residues. The span at 1174–1195 (SHHQQLLQQQQQQHMQRSQSQQ) shows a compositional bias: low complexity. A compositionally biased stretch (polar residues) spans 1234–1253 (NMTTSPAGTTKFANANSGFP). The span at 1254–1273 (QNLVQSSSNQVQSQQWKNNS) shows a compositional bias: low complexity. Polar residues-rich tracts occupy residues 1274–1296 (PRTT…SVAA), 1321–1342 (NSKP…NHQA), and 1351–1360 (SPSTSSVSKN). Positions 1361–1382 (ASGSPRTTASASSAANKGGQAS) are enriched in low complexity. Composition is skewed to polar residues over residues 1383 to 1397 (TTTH…NLQP) and 1405 to 1419 (GGRN…NPTT). Residues 1420-1435 (SSGSKSQQQQQLPKHG) show a composition bias toward low complexity.

In terms of assembly, interacts with MYC2.

It is found in the nucleus. In terms of biological role, regulator of normal clock function. Acts in the mid to late night. Contributes to the amplitude of circadian clocks. May act on the transcriptional induction of LATE ELONGATED HYPOCOTYL (LHY). Inhibits MYC2 protein accumulation, acting as a negative factor in the JA-signaling pathway. The chain is Protein TIME FOR COFFEE (TIC) from Arabidopsis thaliana (Mouse-ear cress).